A 541-amino-acid polypeptide reads, in one-letter code: Man(5)GlcNAc(2)-PP-dolichol translocation protein RFT1 (541 aa).

Helical transmembrane passes span Ser-16 to Leu-36, Gly-45 to Ala-62, Leu-85 to Leu-105, Val-123 to Ala-143, Leu-154 to His-176, Leu-187 to Ser-207, Leu-335 to Leu-355, Cys-376 to Met-396, Ser-414 to Ala-434, Val-470 to Cys-490, and Leu-499 to Thr-519.

Belongs to the RFT1 family.

The protein resides in the endoplasmic reticulum membrane. Its pathway is protein modification; protein glycosylation. Its function is as follows. Intramembrane glycolipid transporter that operates in the biosynthetic pathway of dolichol-linked oligosaccharides, the glycan precursors employed in protein asparagine (N)-glycosylation. The sequential addition of sugars to dolichol pyrophosphate produces dolichol-linked oligosaccharides containing fourteen sugars, including two GlcNAcs, nine mannoses and three glucoses. Once assembled, the oligosaccharide is transferred from the lipid to nascent proteins by oligosaccharyltransferases. The assembly of dolichol-linked oligosaccharides begins on the cytosolic side of the endoplasmic reticulum membrane and finishes in its lumen. RFT1 could mediate the translocation of the cytosolically oriented intermediate DolPP-GlcNAc2Man5, produced by ALG11, into the ER lumen where dolichol-linked oligosaccharides assembly continues. However, the intramembrane lipid transporter activity could not be confirmed in vitro. This chain is Man(5)GlcNAc(2)-PP-dolichol translocation protein RFT1, found in Mus musculus (Mouse).